Consider the following 315-residue polypeptide: Indoleacetate decarboxylase activating enzyme (315 aa).

Residues 21–311 (HDGPGIRTNV…ADIIEAHGVK (291 aa)) form the Radical SAM core domain. The [4Fe-4S] cluster site is built by Cys35, Cys39, Cys42, Cys61, Cys64, Cys67, Cys71, Cys98, Cys101, Cys106, and Cys110. 2 4Fe-4S ferredoxin-type domains span residues 52–81 (PQLL…AITD) and 89–120 (GYVH…IAGE). S-adenosyl-L-methionine is bound by residues Gly149, 198–200 (DCK), and His271.

Belongs to the organic radical-activating enzymes family. [4Fe-4S] cluster is required as a cofactor.

The catalysed reaction is glycyl-[protein] + reduced [flavodoxin] + S-adenosyl-L-methionine = glycin-2-yl radical-[protein] + semiquinone [flavodoxin] + 5'-deoxyadenosine + L-methionine + H(+). Catalyzes activation of the indoleacetate decarboxylase OsIAD under anaerobic conditions by generation of an organic free radical on a glycine residue, via a homolytic cleavage of S-adenosyl-L-methionine (SAM). The chain is Indoleacetate decarboxylase activating enzyme from Tractidigestivibacter scatoligenes (Olsenella scatoligenes).